We begin with the raw amino-acid sequence, 828 residues long: MKLSRRSFMKANAVAAAAAAAGLSVPGVARAVVGQQEAIKWDKAPCRFCGTGCGVLVGTQQGRVVACQGDPDAPVNRGLNCIKGYFLPKIMYGKDRLTQPLLRMKNGKYDKEGEFTPITWDQAFDVMEEKFKTALKEKGPESIGMFGSGQWTIWEGYAASKLFKAGFRSNNIDPNARHCMASAVVGFMRTFGMDEPMGCYDDIEQADAFVLWGANMAEMHPILWSRITNSRLSNQNVTVAVLSTYQHRSFELADNGIIFTPQSDLVILNYIANYIIQNNAINQDFFSKHVNLRKGATDIGYGLRPTHPLEKAAKNPGSDASEPMSFEDYKAFVAEYTLEKTAEMTGVPKDQLEQLAQLYADPNKKVISYWTMGFNQHTRGVWANNLVYNLHLLTGKISQPGCGPFSLTGQPSACGTAREVGTFAHRLPADMVVTNEKHRDICEKKWNIPSGTIPAKIGLHAVAQDRALKDGKLNVYWTMCTNNMQAGPNINEERMPGWRDPRNFIIVSDPYPTVSALAADLILPTAMWVEKEGAYGNAERRTQFWRQQVQAPGEAKSDLWQLVQFSRRFKTEEVWPEELLAKKPELRGKTLYEVLYATPEVSKFPVSELAEDQLNDESRELGFYLQKGLFEEYAWFGRGHGHDLAPFDDYHKARGLRWPVVNGKETQWRYSEGNDPYVKAGEGYKFYGKPDGKAVIFALPFEPAAEAPDEEYDLWLSTGRVLEHWHTGSMTRRVPELHRAFPEAVLFIHPLDAKARDLRRGDKVKVVSRRGEVISIVETRGRNRPPQGLVYMPFFDAAQLVNKLTLDATDPLSKETDFKKCAVKLEKV.

The segment at residues 1-31 (MKLSRRSFMKANAVAAAAAAAGLSVPGVARA) is a signal peptide (tat-type signal). The 57-residue stretch at 39–95 (IKWDKAPCRFCGTGCGVLVGTQQGRVVACQGDPDAPVNRGLNCIKGYFLPKIMYGKD) folds into the 4Fe-4S Mo/W bis-MGD-type domain. Cysteine 46, cysteine 49, cysteine 53, and cysteine 81 together coordinate [4Fe-4S] cluster. Residues lysine 83, glutamine 150, asparagine 175, cysteine 179, 212-219 (WGANMAEM), 243-247 (STYQH), 262-264 (QSD), methionine 372, glutamine 376, asparagine 482, 508-509 (SD), lysine 531, aspartate 558, and 718-727 (TGRVLEHWHT) each bind Mo-bis(molybdopterin guanine dinucleotide). A substrate-binding site is contributed by phenylalanine 794. Residues asparagine 802 and lysine 819 each contribute to the Mo-bis(molybdopterin guanine dinucleotide) site.

It belongs to the prokaryotic molybdopterin-containing oxidoreductase family. NasA/NapA/NarB subfamily. In terms of assembly, component of the periplasmic nitrate reductase NapAB complex composed of NapA and NapB. Requires [4Fe-4S] cluster as cofactor. Mo-bis(molybdopterin guanine dinucleotide) is required as a cofactor. Post-translationally, predicted to be exported by the Tat system. The position of the signal peptide cleavage has not been experimentally proven.

It localises to the periplasm. The enzyme catalyses 2 Fe(II)-[cytochrome] + nitrate + 2 H(+) = 2 Fe(III)-[cytochrome] + nitrite + H2O. In terms of biological role, catalytic subunit of the periplasmic nitrate reductase complex NapAB. Receives electrons from NapB and catalyzes the reduction of nitrate to nitrite. The polypeptide is Periplasmic nitrate reductase (Shigella flexneri).